Consider the following 110-residue polypeptide: Nucleoid-associated protein Sfum_2790 (110 aa).

This sequence belongs to the YbaB/EbfC family. In terms of assembly, homodimer.

The protein localises to the cytoplasm. It is found in the nucleoid. Functionally, binds to DNA and alters its conformation. May be involved in regulation of gene expression, nucleoid organization and DNA protection. This chain is Nucleoid-associated protein Sfum_2790, found in Syntrophobacter fumaroxidans (strain DSM 10017 / MPOB).